The chain runs to 345 residues: 3'-5' exoribonuclease 1 (345 aa).

Basic and acidic residues-rich tracts occupy residues 1-11 (MEDERGRERGG) and 19-46 (PRPE…ETDG). Positions 1 to 50 (MEDERGRERGGDAAQQKTPRPECEESRPLSVEKKQRCRLDGKETDGSKFI) are disordered. Residues serine 55 and serine 58 each carry the phosphoserine modification. In terms of domain architecture, SAP spans 72 to 106 (INRMSKEELRAKLSEFKLETRGVKDVLKKRLKNYY). Residues 126–302 (ICIIDFEATC…DDSKNIARIA (177 aa)) enclose the Exonuclease domain. Mg(2+) contacts are provided by aspartate 130 and glutamate 132. The active-site Proton acceptor is glutamate 132. Glutamate 132 and alanine 133 together coordinate AMP. Residue aspartate 230 participates in Mg(2+) binding. Histidine 289 serves as the catalytic Proton acceptor. AMP is bound at residue histidine 289. Aspartate 294 contributes to the Mg(2+) binding site.

As to quaternary structure, identified in a histone pre-mRNA complex, at least composed of ERI1, LSM11, SLBP, SNRPB, SYNCRIP and YBX1. Binds to 40S and 60S ribosomal subunits and to 80S assembled ribosomes. Interacts in a cooperative manner with SLBP to the mature 3'-end of histone mRNAs. Found in a ternary complex with SLBP and the stem-loop structure of the 3'-end of histone mRNAs. It depends on Mg(2+) as a cofactor. In terms of tissue distribution, widely expressed with high levels in spleen, thymus and testis (at protein level).

It localises to the cytoplasm. The protein resides in the nucleus. The protein localises to the nucleolus. It carries out the reaction Exonucleolytic cleavage in the 3'- to 5'-direction to yield nucleoside 5'-phosphates.. Its activity is regulated as follows. Although it can bind simultaneously with SLBP to the 3'-end of histone mRNA, the presence of SLBP prevents the exonuclease activity. In terms of biological role, RNA exonuclease that binds to the 3'-end of histone mRNAs and degrades them, suggesting that it plays an essential role in histone mRNA decay after replication. A 2' and 3'-hydroxyl groups at the last nucleotide of the histone 3'-end is required for efficient 3'-end histone mRNA exonuclease activity and degradation of RNA substrates. Also able to degrade the 3'-overhangs of short interfering RNAs (siRNAs) in vitro, suggesting a possible role as regulator of RNA interference (RNAi). Required for binding the 5'-ACCCA-3' sequence present in stem-loop structure. Able to bind other mRNAs. Required for 5.8S rRNA 3'-end processing. Also binds to 5.8s ribosomal RNA. Binds with high affinity to the stem-loop structure of replication-dependent histone pre-mRNAs. In vitro, does not have sequence specificity. In vitro, has weak DNA exonuclease activity. In vitro, shows biphasic kinetics such that there is rapid hydrolysis of the last three unpaired RNA nucleotides in the 39 flanking sequence followed by a much slower cleavage through the stem that occurs over a longer incubation period in the order of hours. ERI1-mediated RNA metabolism plays a key role in chondrogenesis. This is 3'-5' exoribonuclease 1 (Eri1) from Mus musculus (Mouse).